Here is a 513-residue protein sequence, read N- to C-terminus: Probable histone deacetylase 19 (513 aa).

The histone deacetylase stretch occupies residues 23–334 (RRVCYFYDPD…WCYETGVALG (312 aa)). The active-site Proton donor/acceptor is the His-154. Zn(2+)-binding residues include Asp-189, His-191, and Asp-277. Disordered regions lie at residues 384–432 (HAPS…ESSR) and 446–513 (ENAT…YHKP). Residues 398-409 (EIPEQDEDQDDP) show a composition bias toward acidic residues. Positions 410 to 432 (DERHDPDSDMEVDDHKAVEESSR) are enriched in basic and acidic residues. Positions 492 to 504 (NVKNEPESSTKLQ) are enriched in polar residues.

Belongs to the histone deacetylase family. HD type 1 subfamily. The cofactor is Zn(2+).

Its subcellular location is the nucleus. The enzyme catalyses N(6)-acetyl-L-lysyl-[histone] + H2O = L-lysyl-[histone] + acetate. Responsible for the deacetylation of lysine residues on the N-terminal part of the core histones (H2A, H2B, H3 and H4). Histone deacetylation gives a tag for epigenetic repression and plays an important role in transcriptional regulation, cell cycle progression and developmental events. Histone deacetylases act via the formation of large multiprotein complexes. In Zea mays (Maize), this protein is Probable histone deacetylase 19.